The primary structure comprises 415 residues: MTSSKTGQITIRSIGAGGDGVANLPDGQIYVPFTLPGEVVNVARDKNRATLMALLEASPERQNPACRHFEDCGGCALQHWQDEPYRLWKRELVVGALKGRGIDVEVAPLVACNPHTRRRAVFAARKTEKGVLLGFNRHQSHEIIDIVECPVTVPEIIARLDDLREVGALLAPGSGPFKLAATLTESGLDLAASGCGKLNDEQRRALTALVIKKDFARLSHEGEIIVEPKKPLIHFGKVPVPVPPGCFLQATAEAEETMAALVLAHLGKARRVADLFCGVGTFALRIAEKSAVHAVENDAAALAALDRGVRHVQGLKPVSIERRDLFRRPLMPKELLPYNAVVFDPPRAGAEEQALELAKSKVEKVVAISCNPVTLARDLAILQKGGYRIERVTPIDQFLWSAHVEAVAVLTKGRQ.

4 residues coordinate [4Fe-4S] cluster: C66, C72, C75, and C149. S-adenosyl-L-methionine is bound by residues Q249, F276, E296, and D344. C370 (nucleophile) is an active-site residue.

The protein belongs to the class I-like SAM-binding methyltransferase superfamily. RNA M5U methyltransferase family.

This is an uncharacterized protein from Brucella suis biovar 1 (strain 1330).